Reading from the N-terminus, the 231-residue chain is Adenosine 5'-phosphosulfate reductase (231 aa).

The [4Fe-4S] cluster site is built by cysteine 118, cysteine 119, cysteine 201, and cysteine 204. Cysteine 227 functions as the Nucleophile; cysteine thiosulfonate intermediate in the catalytic mechanism.

The protein belongs to the PAPS reductase family. CysH subfamily. [4Fe-4S] cluster serves as cofactor.

The protein resides in the cytoplasm. The enzyme catalyses [thioredoxin]-disulfide + sulfite + AMP + 2 H(+) = adenosine 5'-phosphosulfate + [thioredoxin]-dithiol. It functions in the pathway sulfur metabolism; hydrogen sulfide biosynthesis; sulfite from sulfate. Its function is as follows. Catalyzes the formation of sulfite from adenosine 5'-phosphosulfate (APS) using thioredoxin as an electron donor. In Halalkalibacterium halodurans (strain ATCC BAA-125 / DSM 18197 / FERM 7344 / JCM 9153 / C-125) (Bacillus halodurans), this protein is Adenosine 5'-phosphosulfate reductase.